Consider the following 707-residue polypeptide: F-box/WD repeat-containing protein 7 (707 aa).

A disordered region spans residues 1-151; the sequence is MNQELLSVGS…SVTNSSSIVD (151 aa). At serine 26 the chain carries Phosphoserine; by ATM. Positions 57 to 68 are enriched in low complexity; that stretch reads GEVVGVEPRPGG. Residues 69-84 show a composition bias toward polar residues; that stretch reads QNDSQQGQLEENNNRF. Over residues 87–129 the composition is skewed to acidic residues; it reads VDEDSSGNQEEQEEDEEHAGEQDEEDEEEEEMDQESDDFDQSD. The segment covering 130–139 has biased composition (basic and acidic residues); it reads DSSREDEHTH. The residue at position 205 (threonine 205) is a Phosphothreonine. Residue serine 227 is modified to Phosphoserine; by SGK1. The 47-residue stretch at 278-324 folds into the F-box domain; sequence RDFISLLPKELALYVLSFLEPKDLLQAAQTCRYWRILAEDNLLWREK. WD repeat units lie at residues 378–418, 420–456, 459–498, 500–536, 539–578, 580–618, and 622–659; these read GHDD…RTLV, HTGGVWSSQMRDNIIISGSTDRTLKVWNAETGECIHT, GHTSTVRCMHLHEKRVVSGSRDATLRVWDIETGQCLHVLM, HVAAVRCVQYDGRRVVSGAYDFMVKVWDPETETCLHT, GHTNRVYSLQFDGIHVVSGSLDTSIRVWDVETGNCIHTLT, HQSLTSGMELKDNILVSGNADSTVKIWDIKTGQCLQTLQ, and KHQSAVTCLQFNKNFVITSSDDGTVKLWDLKTGEFIRN.

As to quaternary structure, homodimer; homodimerization plays a role in substrate binding and/or ubiquitination and degradation. Component of the SCF(FBXW7) complex consisting of CUL1, RBX1, SKP1 and FBXW7. Interacts (via F-box domain) with SKP1. Interacts (via F-box domain) with pseudophosphatase STYX; the interaction is direct and prevents FBXW7 interaction with SKP1. Interacts with cyclin-E (CCNE1 or CCNE2). Interacts with PSEN1. Forms a trimeric complex with NOTCH1 and SGK1. Interacts with NOTCH1 intracellular domain/NICD and NOTCH4 intracellular domain/NICD. Interacts with NOTCH2 intracellular domain (N2ICD). Interacts with MYC (when phosphorylated). Interacts with USP28, counteracting ubiquitination of MYC. Interacts with JUN. Found in a complex with JUN and PRR7. Interacts with JUN and PRR7; the interaction inhibits ubiquitination-mediated JUN degradation, promoting its phosphorylation and transcriptional activity. Interacts (when phosphorylated at Thr-205) with PIN1, disrupting FBXW7 dimerization and promoting FBXW7 autoubiquitination and degradation. Interacts with UBE2QL1. Interacts with FAM83D; promotes FBXW7 degradation. Interacts with MYCN; FBXW7 competes with AURKA for binding to unphosphorylated MYCN but not for binding to phosphorylated MYCN. Interacts with STOML1. Interacts with NFE2L1. Interacts with USP36, counteracting ubiquitination of MYC. Interacts with NR1D1. Interacts with RICTOR; mediates RICTOR ubiquitination and degradation. Interacts with USP38, counteracting ubiquitination of MYC. In terms of assembly, (Microbial infection) Interacts (via WD repeats) with SV40 large T antigen (via CPD region). In terms of processing, phosphorylation at Thr-205 promotes interaction with PIN1, leading to disrupt FBXW7 dimerization and promoting FBXW7 autoubiquitination and degradation. Phosphorylated by ATM at Ser-26 in response to DNA damage, promoting recruitment to DNA damage sites and 'Lys-63'-linked ubiquitination of phosphorylated XRCC4. Post-translationally, ubiquitinated: autoubiquitinates following phosphorylation at Thr-205 and subsequent interaction with PIN1. Ubiquitination leads to its proteasomal degradation. Widely expressed. In terms of tissue distribution, expressed in brain.

It is found in the nucleus. It localises to the nucleoplasm. Its subcellular location is the chromosome. The protein localises to the cytoplasm. The protein resides in the nucleolus. Its pathway is protein modification; protein ubiquitination. Substrate recognition component of a SCF (SKP1-CUL1-F-box protein) E3 ubiquitin-protein ligase complex which mediates the ubiquitination and subsequent proteasomal degradation of target proteins. Recognizes and binds phosphorylated sites/phosphodegrons within target proteins and thereafter brings them to the SCF complex for ubiquitination. Identified substrates include cyclin-E (CCNE1 or CCNE2), DISC1, JUN, MYC, NOTCH1 released notch intracellular domain (NICD), NFE2L1, NOTCH2, MCL1, MLST8, RICTOR, and probably PSEN1. Acts as a negative regulator of JNK signaling by binding to phosphorylated JUN and promoting its ubiquitination and subsequent degradation. Involved in bone homeostasis and negative regulation of osteoclast differentiation. Regulates the amplitude of the cyclic expression of hepatic core clock genes and genes involved in lipid and glucose metabolism via ubiquitination and proteasomal degradation of their transcriptional repressor NR1D1; CDK1-dependent phosphorylation of NR1D1 is necessary for SCF(FBXW7)-mediated ubiquitination. Also able to promote 'Lys-63'-linked ubiquitination in response to DNA damage. The SCF(FBXW7) complex facilitates double-strand break repair following phosphorylation by ATM: phosphorylation promotes localization to sites of double-strand breaks and 'Lys-63'-linked ubiquitination of phosphorylated XRCC4, enhancing DNA non-homologous end joining. This chain is F-box/WD repeat-containing protein 7, found in Homo sapiens (Human).